The primary structure comprises 3164 residues: Large tegument protein deneddylase (3164 aa).

The tract at residues 1–273 (MGGGNNTNPG…SETYLQDEAF (273 aa)) is deubiquitination activity. Residues 45–263 (VVTGARNQFA…TAAALHLYGA (219 aa)) form the Peptidase C76 domain. Residues cysteine 65, aspartate 197, and histidine 199 contribute to the active site. The disordered stretch occupies residues 289 to 508 (AGLGEPCVGV…GEDDGPTVPA (220 aa)). Over residues 308–321 (GPHPPTAAQSPPPT) the composition is skewed to pro residues. Over residues 343–353 (PEAKRPNRAPD) the composition is skewed to basic and acidic residues. A compositionally biased stretch (pro residues) spans 365–390 (PTDPPSADPPSADPPSAIPPPPPSAP). Residues 416 to 432 (GRHRARYSAGLPKRRRP) are compositionally biased toward basic residues. A nuclear localization signal region spans residues 426–432 (LPKRRRP). An interaction with inner tegument protein region spans residues 579 to 609 (LELCVIFFFERVLAFLIENGARTHTQAGVAG). Residues 579 to 609 (LELCVIFFFERVLAFLIENGARTHTQAGVAG) are interaction with UL37. Disordered regions lie at residues 2296–2318 (QTLS…LYRP), 2518–2552 (HPVY…LGPG), and 2583–3020 (ASDD…SLSG). The span at 2653–2667 (QSSPAPPDATAPRPP) shows a compositional bias: pro residues. The segment covering 2668 to 2680 (ASSRASAASSSGS) has biased composition (low complexity). Basic residues predominate over residues 2681–2690 (RARRHRRARS). Residues 2722–2732 (PPAPPKPPEPA) show a composition bias toward pro residues. Over residues 2834–2843 (PAEPTSSSPA) the composition is skewed to low complexity. Pro residues predominate over residues 2844–2866 (GPSPPPPAVQPVAPPPTSGPPPT). Positions 2886-2897 (TRQPVATPTTSA) are enriched in polar residues. Tandem repeats lie at residues 2911-2912 (PQ), 2913-2914 (PQ), 2915-2916 (PQ), 2917-2918 (PQ), 2919-2920 (PQ), 2921-2922 (PQ), 2923-2924 (PQ), 2925-2926 (PQ), 2927-2928 (PQ), 2929-2930 (PQ), 2931-2932 (PQ), 2933-2934 (PQ), 2935-2936 (PQ), 2937-2938 (PQ), 2939-2940 (PQ), 2941-2942 (PQ), 2943-2944 (PQ), 2945-2946 (PQ), 2947-2948 (PQ), 2949-2950 (PQ), 2951-2952 (PQ), 2953-2954 (PQ), 2955-2956 (PQ), 2957-2958 (PQ), 2959-2960 (PQ), 2961-2962 (PQ), 2963-2964 (PQ), 2965-2966 (PQ), 2967-2968 (PQ), 2969-2970 (PQ), 2971-2972 (PQ), 2973-2974 (PQ), 2975-2976 (PQ), 2977-2978 (PQ), and 2979-2980 (PQ). The segment at 2911 to 2980 (PQPQPQPQPQ…PQPQPQPQPQ (70 aa)) is 35 X 2 AA tandem repeats of P-Q. Positions 2912–2978 (QPQPQPQPQP…PQPQPQPQPQ (67 aa)) are enriched in pro residues. Polar residues predominate over residues 2999-3014 (NRPSVPASASSTNPRT).

The protein belongs to the herpesviridae large tegument protein family. Interacts with host CUL1 and CUL4A; these interactions inhibit the E3 ligase activity of cullins. Interacts with inner tegument protein. Interacts with capsid vertex specific component CVC2. Interacts with the major capsid protein/MCP. Interacts with VP16; this interaction is important for outer tegument association to the capsid. May form homodimers. Proteolytically processed, possibly into several polypeptides. Enzymatic activity is only detectable following cleavage of the UL36 protein, which occurs late during viral replication.

It localises to the virion tegument. It is found in the host cytoplasm. The protein localises to the host nucleus. The catalysed reaction is Thiol-dependent hydrolysis of ester, thioester, amide, peptide and isopeptide bonds formed by the C-terminal Gly of ubiquitin (a 76-residue protein attached to proteins as an intracellular targeting signal).. Large tegument protein that plays multiple roles in the viral cycle. During viral entry, remains associated with the capsid while most of the tegument is detached and participates in the capsid transport toward the host nucleus. Plays a role in the routing of the capsid at the nuclear pore complex and subsequent uncoating. Within the host nucleus, acts as a deneddylase and promotes the degradation of nuclear CRLs (cullin-RING ubiquitin ligases) and thereby stabilizes nuclear CRL substrates, while cytoplasmic CRLs remain unaffected. These modifications prevent host cell cycle S-phase progression and create a favorable environment allowing efficient viral genome replication. Participates later in the secondary envelopment of capsids. Indeed, plays a linker role for the association of the outer viral tegument to the capsids together with the inner tegument protein. In Human herpesvirus 1 (strain 17) (HHV-1), this protein is Large tegument protein deneddylase.